The sequence spans 157 residues: SsrA-binding protein (157 aa).

Residues 136–151 are compositionally biased toward basic and acidic residues; sequence KRETSAKRDWSREKQR. A disordered region spans residues 136–157; it reads KRETSAKRDWSREKQRLLKQNS.

It belongs to the SmpB family.

The protein localises to the cytoplasm. Required for rescue of stalled ribosomes mediated by trans-translation. Binds to transfer-messenger RNA (tmRNA), required for stable association of tmRNA with ribosomes. tmRNA and SmpB together mimic tRNA shape, replacing the anticodon stem-loop with SmpB. tmRNA is encoded by the ssrA gene; the 2 termini fold to resemble tRNA(Ala) and it encodes a 'tag peptide', a short internal open reading frame. During trans-translation Ala-aminoacylated tmRNA acts like a tRNA, entering the A-site of stalled ribosomes, displacing the stalled mRNA. The ribosome then switches to translate the ORF on the tmRNA; the nascent peptide is terminated with the 'tag peptide' encoded by the tmRNA and targeted for degradation. The ribosome is freed to recommence translation, which seems to be the essential function of trans-translation. The chain is SsrA-binding protein from Cereibacter sphaeroides (strain ATCC 17029 / ATH 2.4.9) (Rhodobacter sphaeroides).